The primary structure comprises 624 residues: Protein NRT1/ PTR FAMILY 6.1 (624 aa).

The tract at residues 1–20 (MVASEIKSPVSVPETPGSSS) is disordered. A run of 2 helical transmembrane segments spans residues 83-100 (MAYF…FYVM) and 114-134 (FLGI…AYLG). Residue Thr138 is modified to Phosphothreonine. 10 consecutive transmembrane segments (helical) span residues 139-159 (IAIF…GASL), 184-204 (SWQM…AAGI), 230-250 (FFNF…TLVV), 258-278 (WGMA…LFFA), 378-398 (LIPI…YLTL), 422-442 (VFPG…FVPI), 459-479 (VGIG…FENY), 504-524 (WLLI…VGLL), 537-557 (SIGS…ATIL), and 585-605 (CLYW…LWSA).

The protein belongs to the major facilitator superfamily. Proton-dependent oligopeptide transporter (POT/PTR) (TC 2.A.17) family. As to expression, expressed in flower and siliques.

It localises to the membrane. In Arabidopsis thaliana (Mouse-ear cress), this protein is Protein NRT1/ PTR FAMILY 6.1 (NPF6.1).